Reading from the N-terminus, the 464-residue chain is tRNA modification GTPase MnmE (464 aa).

(6S)-5-formyl-5,6,7,8-tetrahydrofolate is bound by residues arginine 28, glutamate 90, and arginine 129. The TrmE-type G domain occupies 226-385 (GLATAIVGRP…LEEKIAELFF (160 aa)). Asparagine 236 serves as a coordination point for K(+). GTP contacts are provided by residues 236 to 241 (NVGKSS), 255 to 261 (TDIAGTT), and 280 to 283 (DTAG). Serine 240 provides a ligand contact to Mg(2+). K(+) contacts are provided by threonine 255, isoleucine 257, and threonine 260. Threonine 261 is a binding site for Mg(2+). Lysine 464 contributes to the (6S)-5-formyl-5,6,7,8-tetrahydrofolate binding site.

It belongs to the TRAFAC class TrmE-Era-EngA-EngB-Septin-like GTPase superfamily. TrmE GTPase family. As to quaternary structure, homodimer. Heterotetramer of two MnmE and two MnmG subunits. Requires K(+) as cofactor.

The protein localises to the cytoplasm. Its function is as follows. Exhibits a very high intrinsic GTPase hydrolysis rate. Involved in the addition of a carboxymethylaminomethyl (cmnm) group at the wobble position (U34) of certain tRNAs, forming tRNA-cmnm(5)s(2)U34. The sequence is that of tRNA modification GTPase MnmE from Ligilactobacillus salivarius (strain UCC118) (Lactobacillus salivarius).